Consider the following 292-residue polypeptide: Protein/nucleic acid deglycase HchA (292 aa).

The span at 1–12 (MSQDVNELSKQP) shows a compositional bias: polar residues. Positions 1–23 (MSQDVNELSKQPTPDKAEDNAFF) are disordered. The active-site Nucleophile is Cys-190.

This sequence belongs to the peptidase C56 family. HchA subfamily.

The protein localises to the cytoplasm. The catalysed reaction is N(omega)-(1-hydroxy-2-oxopropyl)-L-arginyl-[protein] + H2O = lactate + L-arginyl-[protein] + H(+). It carries out the reaction N(6)-(1-hydroxy-2-oxopropyl)-L-lysyl-[protein] + H2O = lactate + L-lysyl-[protein] + H(+). The enzyme catalyses S-(1-hydroxy-2-oxopropyl)-L-cysteinyl-[protein] + H2O = lactate + L-cysteinyl-[protein] + H(+). It catalyses the reaction N(omega)-(1-hydroxy-2-oxoethyl)-L-arginyl-[protein] + H2O = L-arginyl-[protein] + glycolate + H(+). The catalysed reaction is N(6)-(1-hydroxy-2-oxoethyl)-L-lysyl-[protein] + H2O = glycolate + L-lysyl-[protein] + H(+). It carries out the reaction S-(1-hydroxy-2-oxoethyl)-L-cysteinyl-[protein] + H2O = glycolate + L-cysteinyl-[protein] + H(+). The enzyme catalyses N(2)-(1-hydroxy-2-oxopropyl)-dGTP + H2O = lactate + dGTP + H(+). It catalyses the reaction N(2)-(1-hydroxy-2-oxopropyl)-GTP + H2O = lactate + GTP + H(+). The catalysed reaction is N(2)-(1-hydroxy-2-oxopropyl)-GDP + H2O = lactate + GDP + H(+). It carries out the reaction N(2)-(1-hydroxy-2-oxopropyl)-GMP + H2O = lactate + GMP + H(+). The enzyme catalyses N(2)-(1-hydroxy-2-oxoethyl)-dGTP + H2O = dGTP + glycolate + H(+). It catalyses the reaction N(2)-(1-hydroxy-2-oxoethyl)-GTP + H2O = glycolate + GTP + H(+). The catalysed reaction is N(2)-(1-hydroxy-2-oxoethyl)-GDP + H2O = glycolate + GDP + H(+). It carries out the reaction N(2)-(1-hydroxy-2-oxoethyl)-GMP + H2O = glycolate + GMP + H(+). The enzyme catalyses an N(2)-(1-hydroxy-2-oxopropyl)-guanosine in RNA + H2O = a guanosine in RNA + lactate + H(+). It catalyses the reaction an N(2)-(1-hydroxy-2-oxopropyl)-2'-deoxyguanosine in DNA + H2O = a 2'-deoxyguanosine in DNA + lactate + H(+). The catalysed reaction is an N(2)-(1-hydroxy-2-oxoethyl)-guanosine in RNA + H2O = a guanosine in RNA + glycolate + H(+). It carries out the reaction an N(2)-(1-hydroxy-2-oxoethyl)-2'-deoxyguanosine in DNA + H2O = a 2'-deoxyguanosine in DNA + glycolate + H(+). In terms of biological role, protein and nucleotide deglycase that catalyzes the deglycation of the Maillard adducts formed between amino groups of proteins or nucleotides and reactive carbonyl groups of glyoxals. Thus, functions as a protein deglycase that repairs methylglyoxal- and glyoxal-glycated proteins, and releases repaired proteins and lactate or glycolate, respectively. Deglycates cysteine, arginine and lysine residues in proteins, and thus reactivates these proteins by reversing glycation by glyoxals. Acts on early glycation intermediates (hemithioacetals and aminocarbinols), preventing the formation of Schiff bases and advanced glycation endproducts (AGE). Also functions as a nucleotide deglycase able to repair glycated guanine in the free nucleotide pool (GTP, GDP, GMP, dGTP) and in DNA and RNA. Is thus involved in a major nucleotide repair system named guanine glycation repair (GG repair), dedicated to reversing methylglyoxal and glyoxal damage via nucleotide sanitization and direct nucleic acid repair. Plays an important role in protecting cells from carbonyl stress. The sequence is that of Protein/nucleic acid deglycase HchA from Staphylococcus aureus (strain MSSA476).